The following is a 220-amino-acid chain: Ribosome maturation factor RimP (220 aa).

Low complexity predominate over residues 1 to 15; the sequence is MSQRGRATRPTGPTG. 2 disordered regions span residues 1–35 and 184–220; these read MSQRGRATRPTGPTGRPRRTGGQRSAGRVSRGGDL and PGRVQVEFTRPGETDGADGADEAGDFDDDDDVEGEER. Residues 198–220 are compositionally biased toward acidic residues; sequence DGADGADEAGDFDDDDDVEGEER.

The protein belongs to the RimP family.

It localises to the cytoplasm. In terms of biological role, required for maturation of 30S ribosomal subunits. This is Ribosome maturation factor RimP from Salinispora tropica (strain ATCC BAA-916 / DSM 44818 / JCM 13857 / NBRC 105044 / CNB-440).